Consider the following 115-residue polypeptide: Iron-sulfur cluster insertion protein ErpA (115 aa).

Residues C43, C107, and C109 each coordinate iron-sulfur cluster.

The protein belongs to the HesB/IscA family. As to quaternary structure, homodimer. Iron-sulfur cluster serves as cofactor.

Required for insertion of 4Fe-4S clusters for at least IspG. In Photorhabdus laumondii subsp. laumondii (strain DSM 15139 / CIP 105565 / TT01) (Photorhabdus luminescens subsp. laumondii), this protein is Iron-sulfur cluster insertion protein ErpA.